The chain runs to 1368 residues: DNA-directed RNA polymerase subunit beta (1368 aa).

The protein belongs to the RNA polymerase beta chain family. In terms of assembly, the RNAP catalytic core consists of 2 alpha, 1 beta, 1 beta' and 1 omega subunit. When a sigma factor is associated with the core the holoenzyme is formed, which can initiate transcription.

The enzyme catalyses RNA(n) + a ribonucleoside 5'-triphosphate = RNA(n+1) + diphosphate. Its function is as follows. DNA-dependent RNA polymerase catalyzes the transcription of DNA into RNA using the four ribonucleoside triphosphates as substrates. This is DNA-directed RNA polymerase subunit beta from Ralstonia pickettii (strain 12J).